The sequence spans 345 residues: Biotin synthase (345 aa).

Residues 59 to 286 form the Radical SAM core domain; sequence NEVQLSTLLS…TTMVRLSAGR (228 aa). [4Fe-4S] cluster contacts are provided by C74, C78, and C81. [2Fe-2S] cluster-binding residues include C118, C149, C209, and R281.

Belongs to the radical SAM superfamily. Biotin synthase family. As to quaternary structure, homodimer. It depends on [4Fe-4S] cluster as a cofactor. Requires [2Fe-2S] cluster as cofactor.

It catalyses the reaction (4R,5S)-dethiobiotin + (sulfur carrier)-SH + 2 reduced [2Fe-2S]-[ferredoxin] + 2 S-adenosyl-L-methionine = (sulfur carrier)-H + biotin + 2 5'-deoxyadenosine + 2 L-methionine + 2 oxidized [2Fe-2S]-[ferredoxin]. The protein operates within cofactor biosynthesis; biotin biosynthesis; biotin from 7,8-diaminononanoate: step 2/2. In terms of biological role, catalyzes the conversion of dethiobiotin (DTB) to biotin by the insertion of a sulfur atom into dethiobiotin via a radical-based mechanism. The chain is Biotin synthase from Leptothrix cholodnii (strain ATCC 51168 / LMG 8142 / SP-6) (Leptothrix discophora (strain SP-6)).